Consider the following 355-residue polypeptide: Protein RecA (355 aa).

65–72 (GPESSGKT) contacts ATP.

This sequence belongs to the RecA family.

The protein resides in the cytoplasm. Can catalyze the hydrolysis of ATP in the presence of single-stranded DNA, the ATP-dependent uptake of single-stranded DNA by duplex DNA, and the ATP-dependent hybridization of homologous single-stranded DNAs. It interacts with LexA causing its activation and leading to its autocatalytic cleavage. The polypeptide is Protein RecA (Pseudomonas putida (strain GB-1)).